A 582-amino-acid polypeptide reads, in one-letter code: Protein NRT1/ PTR FAMILY 5.2 (582 aa).

Transmembrane regions (helical) follow at residues 77–97 (WVGT…ALLG), 100–120 (ITFV…TLSV), 141–161 (ASVL…IGTG), 189–209 (FFNW…TVLV), 217–237 (WTLG…IFLL), 334–354 (PVLF…TLFV), 370–390 (IPPA…IVLY), 408–428 (ITLL…MIVA), 452–472 (LPLT…ADSF), 493–515 (GTSY…LSTV), and 538–558 (YYYL…LVVV).

The protein belongs to the major facilitator superfamily. Proton-dependent oligopeptide transporter (POT/PTR) (TC 2.A.17) family. Expressed in roots. Detected in shoots, leaves and flowers.

The protein localises to the membrane. Functionally, peptide transporter involved in stress tolerance in seeds during germination and in defense against virulent bacterial pathogens. The protein is Protein NRT1/ PTR FAMILY 5.2 (NPF5.2) of Arabidopsis thaliana (Mouse-ear cress).